The following is a 91-amino-acid chain: DNA-binding protein HU (91 aa).

The protein belongs to the bacterial histone-like protein family. As to quaternary structure, homodimer.

Its function is as follows. Histone-like DNA-binding protein which is capable of wrapping DNA to stabilize it, and thus to prevent its denaturation under extreme environmental conditions. The sequence is that of DNA-binding protein HU (hup) from Streptococcus thermophilus.